We begin with the raw amino-acid sequence, 425 residues long: Serine--tRNA ligase (425 aa).

226-228 is a binding site for L-serine; it reads TSE. Residues 257–259 and valine 273 contribute to the ATP site; that span reads RRE. L-serine is bound at residue glutamate 280. 344-347 contacts ATP; that stretch reads ELTS. Threonine 382 serves as a coordination point for L-serine.

The protein belongs to the class-II aminoacyl-tRNA synthetase family. Type-1 seryl-tRNA synthetase subfamily. As to quaternary structure, homodimer. The tRNA molecule binds across the dimer.

The protein localises to the cytoplasm. The catalysed reaction is tRNA(Ser) + L-serine + ATP = L-seryl-tRNA(Ser) + AMP + diphosphate + H(+). It catalyses the reaction tRNA(Sec) + L-serine + ATP = L-seryl-tRNA(Sec) + AMP + diphosphate + H(+). Its pathway is aminoacyl-tRNA biosynthesis; selenocysteinyl-tRNA(Sec) biosynthesis; L-seryl-tRNA(Sec) from L-serine and tRNA(Sec): step 1/1. Functionally, catalyzes the attachment of serine to tRNA(Ser). Is also able to aminoacylate tRNA(Sec) with serine, to form the misacylated tRNA L-seryl-tRNA(Sec), which will be further converted into selenocysteinyl-tRNA(Sec). This chain is Serine--tRNA ligase, found in Mycobacterium avium (strain 104).